A 624-amino-acid chain; its full sequence is Chaperone protein HtpG (624 aa).

The a; substrate-binding stretch occupies residues 1–336 (MKGQETRGFQ…SSDLPLNVSR (336 aa)). The interval 337–552 (EILQDSTVTR…ADEMSTQMAK (216 aa)) is b. Positions 553–624 (LFAAAGQKVP…IRRMNQLLVS (72 aa)) are c.

The protein belongs to the heat shock protein 90 family. In terms of assembly, homodimer.

It is found in the cytoplasm. Its function is as follows. Molecular chaperone. Has ATPase activity. This is Chaperone protein HtpG from Escherichia coli O139:H28 (strain E24377A / ETEC).